A 116-amino-acid chain; its full sequence is Iron-sulfur cluster insertion protein ErpA (116 aa).

3 residues coordinate iron-sulfur cluster: Cys-44, Cys-108, and Cys-110.

This sequence belongs to the HesB/IscA family. Homodimer. Iron-sulfur cluster is required as a cofactor.

Functionally, required for insertion of 4Fe-4S clusters for at least IspG. This Pseudomonas entomophila (strain L48) protein is Iron-sulfur cluster insertion protein ErpA.